Reading from the N-terminus, the 353-residue chain is Tsukushi (353 aa).

A signal peptide spans 1 to 16; the sequence is MPWPLLLLLAVSGAQT. Positions 17–58 constitute an LRRNT domain; the sequence is TRPCFPGCQCEVETFGLFDSFSLTRVDCSGLGPHIMPVPIPL. 10 LRR repeats span residues 59 to 80, 85 to 106, 109 to 130, 132 to 153, 159 to 179, 185 to 206, 207 to 227, 230 to 249, 255 to 276, and 280 to 301; these read DTAHLDLSSNRLEMVNESVLAG, TLAGLDLSHNLLTSISPTAFSR, YLESLDLSHNGLTALPAESFTS, PLSDVNLSHNQLREVSVSAFTT, ALHVDLSHNLIHRLVPHPTRA, TIQSLNLAWNRLHAVPNLRDLP, LRYLSLDGNPLAVIGPGAFAG, GLTHLSLASLQRLPELAPSG, GLQVLDLSGNPKLNWAGAEVFS, and SLQELDLSGTNLVPLPEALLLH. Asparagine 74 is a glycosylation site (N-linked (GlcNAc...) asparagine). N-linked (GlcNAc...) asparagine glycosylation occurs at asparagine 137.

As to quaternary structure, interacts with FZD4 (via FZ domain); competes with WNT2B for binding to FZD4, inhibiting Wnt signaling and repressing peripheral eye development. Interacts with TGFB1; the interaction contributes to regulation of the hair cycle. Interacts with netrin. Interacts with CCN2.

It is found in the secreted. Functionally, contributes to various developmental events and other processes such as wound healing and cholesterol homeostasis through its interactions with multiple signaling pathways. Wnt signaling inhibitor which competes with WNT2B for binding to Wnt receptor FZD4 and represses WNT2B-dependent development of the peripheral eye. Plays a role in regulating the hair cycle by controlling TGFB1 signaling. Required for the development of the anterior commissure in the brain by inhibiting neurite outgrowth. Essential for terminal differentiation of hippocampal neural stem cells. Plays a role in regulating bone elongation and bone mass by modulating growth plate chondrocyte function and overall body size. Required for development of the inner ear through its involvement in stereocilia formation in inner hair cells. Facilitates wound healing by inhibiting secretion of TGFB1 from macrophages which prevents myofibroblast differentiation, maintaining inflammatory cell quiescence. Plays a role in cholesterol homeostasis by reducing circulating high-density lipoprotein cholesterol, lowering cholesterol efflux capacity and decreasing cholesterol-to-bile acid conversion in the liver. In one study, shown to negatively regulate sympathetic innervation in brown fat, leading to reduced energy expenditure. In another study, shown not to affect brown fat thermogenic capacity, body weight gain or glucose homeostasis. The protein is Tsukushi (TSKU) of Homo sapiens (Human).